We begin with the raw amino-acid sequence, 53 residues long: Mannose/glucose-specific lectin alpha 2 chain (53 aa).

The protein belongs to the leguminous lectin family. As to quaternary structure, tetramer of two alpha and two beta chains.

The protein is Mannose/glucose-specific lectin alpha 2 chain of Lathyrus ochrus (Cyprus-vetch).